We begin with the raw amino-acid sequence, 409 residues long: Tryptophan synthase beta chain (409 aa).

The residue at position 100 (lysine 100) is an N6-(pyridoxal phosphate)lysine.

It belongs to the TrpB family. In terms of assembly, tetramer of two alpha and two beta chains. Pyridoxal 5'-phosphate serves as cofactor.

It catalyses the reaction (1S,2R)-1-C-(indol-3-yl)glycerol 3-phosphate + L-serine = D-glyceraldehyde 3-phosphate + L-tryptophan + H2O. Its pathway is amino-acid biosynthesis; L-tryptophan biosynthesis; L-tryptophan from chorismate: step 5/5. Its function is as follows. The beta subunit is responsible for the synthesis of L-tryptophan from indole and L-serine. This chain is Tryptophan synthase beta chain, found in Pyrobaculum arsenaticum (strain DSM 13514 / JCM 11321 / PZ6).